Reading from the N-terminus, the 114-residue chain is Dolichyl-diphosphooligosaccharide--protein glycosyltransferase subunit DAD1 (114 aa).

Residues 1–30 lie on the Cytoplasmic side of the membrane; that stretch reads MPKAAGDAKLLIQSLNKAYAATPTNLKIID. A helical membrane pass occupies residues 31-51; the sequence is LYVVFAVVTALLQVVYMGIVG. Serine 52 is a topological domain (lumenal). The helical transmembrane segment at 53-73 threads the bilayer; the sequence is FPFNSFLSGVLSCIGTAVLAV. The Cytoplasmic portion of the chain corresponds to 74–93; the sequence is CHRIQVNKDNKEFKDLAPER. A helical membrane pass occupies residues 94–114; sequence AFADFVLCSLVLHLVIMNFLG.

This sequence belongs to the DAD/OST2 family. In terms of assembly, component of the oligosaccharyltransferase (OST) complex.

The protein resides in the endoplasmic reticulum membrane. Its pathway is protein modification; protein glycosylation. In terms of biological role, subunit of the oligosaccharyl transferase (OST) complex that catalyzes the initial transfer of a defined glycan (Glc(3)Man(9)GlcNAc(2) in eukaryotes) from the lipid carrier dolichol-pyrophosphate to an asparagine residue within an Asn-X-Ser/Thr consensus motif in nascent polypeptide chains, the first step in protein N-glycosylation. N-glycosylation occurs cotranslationally and the complex associates with the Sec61 complex at the channel-forming translocon complex that mediates protein translocation across the endoplasmic reticulum (ER). All subunits are required for a maximal enzyme activity. The polypeptide is Dolichyl-diphosphooligosaccharide--protein glycosyltransferase subunit DAD1 (DAD1) (Hordeum vulgare (Barley)).